The sequence spans 363 residues: Homeobox protein Hox-A2 (363 aa).

2 disordered regions span residues 23-133 (TSFP…SRRL) and 183-216 (MKHKRQTQCKENQNGDGKFKNLEDSGQTEDDEEK). 2 stretches are compositionally biased toward polar residues: residues 31–46 (TFQSSSIKNSTLSHST) and 55–78 (TIPSLNPSSHPRQSRPKQSPNGTS). The Antp-type hexapeptide motif lies at 88–93 (EYPWMK). Residues 130 to 189 (SRRLRTAYTNTQLLELEKEFHFNKYLCRPRRVEIAALLDLTERQVKVWFQNRRMKHKRQT) constitute a DNA-binding region (homeobox).

Belongs to the Antp homeobox family. Proboscipedia subfamily.

The protein resides in the nucleus. Its function is as follows. Sequence-specific transcription factor which is part of a developmental regulatory system that provides cells with specific positional identities on the anterior-posterior axis. The polypeptide is Homeobox protein Hox-A2 (HOXA2) (Heterodontus francisci (Horn shark)).